A 651-amino-acid polypeptide reads, in one-letter code: Beta-mannosyltransferase 7 (651 aa).

Residues 1–19 (MKLEMSSYLHKVPNTGITN) are Cytoplasmic-facing. The helical transmembrane segment at 20–42 (LSNSKSIVFIMFCATLLFIITSS) threads the bilayer. Topologically, residues 43 to 651 (RYLTGSESLG…VKIDEKSEET (609 aa)) are extracellular. 2 N-linked (GlcNAc...) asparagine glycosylation sites follow: N271 and N423.

The protein belongs to the BMT family.

The protein resides in the membrane. Beta-mannosyltransferase involved in cell wall biosynthesis through beta-1,2-mannosylation of cell wall phosphopeptidomannan. The sequence is that of Beta-mannosyltransferase 7 (BMT7) from Candida albicans (strain SC5314 / ATCC MYA-2876) (Yeast).